A 123-amino-acid chain; its full sequence is ATP synthase epsilon chain (123 aa).

Residues 96–123 form a disordered region; sequence ESRKQSAETEHDKAVAESELRAVKRMEA.

This sequence belongs to the ATPase epsilon chain family. As to quaternary structure, F-type ATPases have 2 components, CF(1) - the catalytic core - and CF(0) - the membrane proton channel. CF(1) has five subunits: alpha(3), beta(3), gamma(1), delta(1), epsilon(1). CF(0) has three main subunits: a, b and c.

It is found in the cell membrane. Produces ATP from ADP in the presence of a proton gradient across the membrane. This Corynebacterium jeikeium (strain K411) protein is ATP synthase epsilon chain.